Here is a 1083-residue protein sequence, read N- to C-terminus: Solute carrier family 12 member 7 (1083 aa).

A disordered region spans residues 1–55 (MPTNFTVVPVEARADGAGDEAAERTEEPESPESVDQTSPTPGDGNPRENSPFINN). Over 1–119 (MPTNFTVVPV…RREVKAPRMG (119 aa)) the chain is Cytoplasmic. The segment covering 12-27 (ARADGAGDEAAERTEE) has biased composition (basic and acidic residues). Ser-30 and Ser-33 each carry phosphoserine. Thr-37 bears the Phosphothreonine mark. Ser-50 and Ser-62 each carry phosphoserine. A discontinuously helical transmembrane segment spans residues 120 to 142 (TFIGVYLPCLQNILGVILFLRLT). Residues Asn-131 and Ile-132 each coordinate K(+). Val-135 serves as a coordination point for chloride. Over 143–149 (WIVGAAG) the chain is Extracellular. The helical transmembrane segment at 150–172 (VMESFLIVAMCCTCTMLTAISMS) threads the bilayer. Residues 173-196 (AIATNGVVPAGGSYYMISRSLGPE) lie on the Cytoplasmic side of the membrane. The chain crosses the membrane as a helical span at residues 197–225 (FGGAVGLCFYLGTTFAGAMYILGTIEIFL). At 226–249 (TYISPSAAIFQAETADGEAAALLN) the chain is on the extracellular side. 2 helical membrane passes run 250–271 (NMRVYGSCALALMAVVVFVGVK) and 272–300 (YVNKLALVFLACVVLSILAIYAGVIKTAF). Residues 301 to 419 (APPDIPVCLL…PYVLTDIMTY (119 aa)) are Extracellular-facing. Asn-312 carries an N-linked (GlcNAc...) (high mannose) asparagine glycan. Asn-331 and Asn-344 each carry an N-linked (GlcNAc...) (complex) asparagine glycan. Asn-360 carries an N-linked (GlcNAc...) (high mannose) asparagine glycan. Residues 420–440 (FTMLVGIYFPSVTGIMAGSNR) traverse the membrane as a helical segment. 2 residues coordinate K(+): Pro-429 and Thr-432. Pro-429 contributes to the chloride binding site. Gly-433 and Ile-434 together coordinate chloride. Topologically, residues 441–450 (SGDLKDAQKS) are cytoplasmic. A helical transmembrane segment spans residues 451 to 473 (IPTGTILAIVTTSFIYLSCIVLF). The Extracellular segment spans residues 474-504 (GACIEGVVLRDKFGEALQGNLVIGMLAWPSP). A helical transmembrane segment spans residues 505–531 (WVIVIGSFFSTCGAGLQSLTGAPRLLQ). At 532-554 (AIARDGIIPFLQVFGHGKANGEP) the chain is on the cytoplasmic side. The next 2 helical transmembrane spans lie at 555-573 (TWALLLTALICETGILIAS) and 574-598 (LDSVAPILSMFFLMCYMFVNLACAV). Tyr-589 is a chloride binding site. The Cytoplasmic segment spans residues 599 to 612 (QTLLRTPNWRPRFK). 2 consecutive transmembrane segments (helical) span residues 613–635 (FYHWTLSFLGMSLCLALMFICSW) and 636–651 (YYALFAMLIAGCIYKY). Residues 652-1083 (IEYRGAEKEW…GGREVITIYS (432 aa)) lie on the Cytoplasmic side of the membrane. The tract at residues 664–680 (GIRGLSLNAARYALLRV) is scissor helix. Phosphothreonine occurs at positions 973 and 980.

The protein belongs to the SLC12A transporter family. K/Cl co-transporter subfamily. Homodimer; adopts a domain-swap conformation at the scissor helices connecting the transmembrane domain and C-terminal domain. Heterodimer with K-Cl cotransporter SLC12A5. In terms of processing, glycosylation at Asn-331 and Asn-344 is required for proper trafficking to the cell surface, and augments protein stability. In terms of tissue distribution, detected in proximal tubules in the kidney, in particular in basolateral membranes of intercalated cells in the cortical collecting duct.

It is found in the cell membrane. It catalyses the reaction K(+)(in) + chloride(in) = K(+)(out) + chloride(out). Its activity is regulated as follows. Activated by N-ethylmaleimide (NEM). Inhibited by furosemide, DIDS and bumetanide. The inhibition is much stronger in the presence of 50 mM K(+) in the uptake medium. Inhibited by DIOA. Inhibited by WNK3. Functionally, mediates electroneutral potassium-chloride cotransport when activated by cell swelling. May mediate K(+) uptake into Deiters' cells in the cochlea and contribute to K(+) recycling in the inner ear. Important for the survival of cochlear outer and inner hair cells and the maintenance of the organ of Corti. May be required for basolateral Cl(-) extrusion in the kidney and contribute to renal acidification. This Mus musculus (Mouse) protein is Solute carrier family 12 member 7 (Slc12a7).